A 328-amino-acid chain; its full sequence is Ferredoxin--NADP reductase 2 (328 aa).

Positions 37, 45, 50, 90, 124, 285, and 325 each coordinate FAD.

This sequence belongs to the ferredoxin--NADP reductase type 2 family. As to quaternary structure, homodimer. Requires FAD as cofactor.

It carries out the reaction 2 reduced [2Fe-2S]-[ferredoxin] + NADP(+) + H(+) = 2 oxidized [2Fe-2S]-[ferredoxin] + NADPH. The chain is Ferredoxin--NADP reductase 2 from Latilactobacillus sakei subsp. sakei (strain 23K) (Lactobacillus sakei subsp. sakei).